Consider the following 472-residue polypeptide: ATP synthase subunit beta (472 aa).

157–164 (GGAGVGKT) contributes to the ATP binding site.

Belongs to the ATPase alpha/beta chains family. In terms of assembly, F-type ATPases have 2 components, CF(1) - the catalytic core - and CF(0) - the membrane proton channel. CF(1) has five subunits: alpha(3), beta(3), gamma(1), delta(1), epsilon(1). CF(0) has three main subunits: a(1), b(2) and c(9-12). The alpha and beta chains form an alternating ring which encloses part of the gamma chain. CF(1) is attached to CF(0) by a central stalk formed by the gamma and epsilon chains, while a peripheral stalk is formed by the delta and b chains.

It is found in the cell membrane. The enzyme catalyses ATP + H2O + 4 H(+)(in) = ADP + phosphate + 5 H(+)(out). In terms of biological role, produces ATP from ADP in the presence of a proton gradient across the membrane. The catalytic sites are hosted primarily by the beta subunits. The protein is ATP synthase subunit beta of Desulforudis audaxviator (strain MP104C).